Here is a 424-residue protein sequence, read N- to C-terminus: Imidazolonepropionase (424 aa).

Fe(3+)-binding residues include His-84 and His-86. Zn(2+) contacts are provided by His-84 and His-86. Positions 93, 156, and 189 each coordinate 4-imidazolone-5-propanoate. Tyr-156 contributes to the N-formimidoyl-L-glutamate binding site. His-254 lines the Fe(3+) pocket. His-254 is a binding site for Zn(2+). Glu-257 contributes to the 4-imidazolone-5-propanoate binding site. Residue Asp-328 coordinates Fe(3+). Zn(2+) is bound at residue Asp-328. Positions 330 and 332 each coordinate N-formimidoyl-L-glutamate. Ser-333 provides a ligand contact to 4-imidazolone-5-propanoate.

This sequence belongs to the metallo-dependent hydrolases superfamily. HutI family. Requires Zn(2+) as cofactor. Fe(3+) is required as a cofactor.

The protein localises to the cytoplasm. It catalyses the reaction 4-imidazolone-5-propanoate + H2O = N-formimidoyl-L-glutamate. The protein operates within amino-acid degradation; L-histidine degradation into L-glutamate; N-formimidoyl-L-glutamate from L-histidine: step 3/3. Functionally, catalyzes the hydrolytic cleavage of the carbon-nitrogen bond in imidazolone-5-propanoate to yield N-formimidoyl-L-glutamate. It is the third step in the universal histidine degradation pathway. This Geobacillus sp. (strain WCH70) protein is Imidazolonepropionase.